Here is an 837-residue protein sequence, read N- to C-terminus: Thioredoxin domain-containing protein 3 homolog (837 aa).

In terms of domain architecture, Thioredoxin spans 6 to 115 (EQIQLQKEIL…LKNVERELKQ (110 aa)). Cys39 and Cys42 are oxidised to a cystine. 3 NDK regions span residues 201–345 (KEVT…SVPI), 355–491 (IEKT…FPKQ), and 493–629 (TLAV…EVLP). Residues 633–837 (VKDSVASISM…EEKTEEQTAS (205 aa)) are disordered. A compositionally biased stretch (polar residues) spans 638 to 647 (ASISMEQSQV). A compositionally biased stretch (acidic residues) spans 652-670 (EEGGEEQTEQPAGEGEEQQ). Low complexity-rich tracts occupy residues 671–707 (AEQPAAESGEQQAEGGEPATETATEGGEQQAEQPPAE), 718–752 (QQTQEGETPAADEAQAEQTQEGETPAADEAQAEQT), and 766–787 (APATEETAAEQAPAAEETQQTQ). A compositionally biased stretch (gly residues) spans 805 to 819 (AGGGEEAVATEGGGE). Residues 820 to 837 (GDAKPEGGEEKTEEQTAS) are compositionally biased toward basic and acidic residues.

This sequence in the C-terminal section; belongs to the NDK family. As to quaternary structure, monomer. In terms of tissue distribution, testis-specific. In sperm, it is a component of the arm dynein of sperm axoneme.

Probably required during the final stages of sperm tail maturation in the testis and/or epididymis, where extensive disulfide bonding of fibrous sheath (FS) proteins occurs. In vitro, it has neither nucleoside diphosphate kinase (NDPK) activity nor reducing activity on disulfide bonds. Exhibits a 3'-5' exonuclease activity with a preference for single-stranded DNA, suggesting roles in DNA proofreading and repair. The protein is Thioredoxin domain-containing protein 3 homolog (NME8) of Heliocidaris crassispina (Sea urchin).